Reading from the N-terminus, the 67-residue chain is Protein AaeX (67 aa).

Transmembrane regions (helical) follow at residues Leu3 to Ile23 and Gly39 to Phe59.

Belongs to the AaeX family.

It localises to the cell membrane. In Yersinia pseudotuberculosis serotype O:1b (strain IP 31758), this protein is Protein AaeX.